Consider the following 220-residue polypeptide: Deoxyribose-phosphate aldolase (220 aa).

The active-site Proton donor/acceptor is the Asp-89. Residue Lys-151 is the Schiff-base intermediate with acetaldehyde of the active site. The Proton donor/acceptor role is filled by Lys-180.

The protein belongs to the DeoC/FbaB aldolase family. DeoC type 1 subfamily.

The protein resides in the cytoplasm. It carries out the reaction 2-deoxy-D-ribose 5-phosphate = D-glyceraldehyde 3-phosphate + acetaldehyde. The protein operates within carbohydrate degradation; 2-deoxy-D-ribose 1-phosphate degradation; D-glyceraldehyde 3-phosphate and acetaldehyde from 2-deoxy-alpha-D-ribose 1-phosphate: step 2/2. Catalyzes a reversible aldol reaction between acetaldehyde and D-glyceraldehyde 3-phosphate to generate 2-deoxy-D-ribose 5-phosphate. The chain is Deoxyribose-phosphate aldolase from Streptococcus pneumoniae serotype 4 (strain ATCC BAA-334 / TIGR4).